The chain runs to 537 residues: Efflux pump ustT (537 aa).

Over residues Met-1–Ala-25 the composition is skewed to basic and acidic residues. The segment at Met-1–Glu-50 is disordered. N-linked (GlcNAc...) asparagine glycosylation occurs at Asn-47. Transmembrane regions (helical) follow at residues Pro-71 to Leu-91, Trp-104 to Met-124, Gly-137 to Leu-157, Met-162 to Gly-182, Trp-193 to Val-213, Leu-236 to Gly-256, Ile-266 to Leu-286, and Phe-304 to Ile-324. The N-linked (GlcNAc...) asparagine glycan is linked to Asn-333. A run of 4 helical transmembrane segments spans residues Ala-339–Gly-359, Leu-363–Gly-383, Trp-397–Leu-417, and Thr-430–Gly-450. N-linked (GlcNAc...) asparagine glycosylation occurs at Asn-501. Residues Thr-507 to Trp-527 form a helical membrane-spanning segment.

The protein belongs to the major facilitator superfamily. TCR/Tet family.

It localises to the cell membrane. Efflux pump; part of the gene cluster that mediates the biosynthesis of ustilaginoidins, dimeric gamma-naphthopyrones isolated from different fungal species. The sequence is that of Efflux pump ustT from Ustilaginoidea virens (Rice false smut fungus).